The chain runs to 167 residues: UPF0225 protein VP1145 (167 aa).

Belongs to the UPF0225 family.

The protein is UPF0225 protein VP1145 of Vibrio parahaemolyticus serotype O3:K6 (strain RIMD 2210633).